Reading from the N-terminus, the 542-residue chain is Adenosylmethionine-8-amino-7-oxononanoate aminotransferase (542 aa).

170-171 (GS) contacts pyridoxal 5'-phosphate. A substrate-binding site is contributed by Tyr205. Asp311 serves as a coordination point for pyridoxal 5'-phosphate. Substrate is bound by residues Lys340, Gly375, and Arg470. Lys340 carries the N6-(pyridoxal phosphate)lysine modification. Positions 509–542 (DGGLWTKRPDGPDNPDKANTPDTPDGARTGETVV) are disordered. The segment covering 515–524 (KRPDGPDNPD) has biased composition (basic and acidic residues).

Belongs to the class-III pyridoxal-phosphate-dependent aminotransferase family. BioA subfamily. As to quaternary structure, homodimer. Requires pyridoxal 5'-phosphate as cofactor.

The protein localises to the cytoplasm. The catalysed reaction is (8S)-8-amino-7-oxononanoate + S-adenosyl-L-methionine = S-adenosyl-4-methylsulfanyl-2-oxobutanoate + (7R,8S)-7,8-diammoniononanoate. Its pathway is cofactor biosynthesis; biotin biosynthesis; 7,8-diaminononanoate from 8-amino-7-oxononanoate (SAM route): step 1/1. Functionally, catalyzes the transfer of the alpha-amino group from S-adenosyl-L-methionine (SAM) to 7-keto-8-aminopelargonic acid (KAPA) to form 7,8-diaminopelargonic acid (DAPA). It is the only aminotransferase known to utilize SAM as an amino donor. The polypeptide is Adenosylmethionine-8-amino-7-oxononanoate aminotransferase (Nitratidesulfovibrio vulgaris (strain ATCC 29579 / DSM 644 / CCUG 34227 / NCIMB 8303 / VKM B-1760 / Hildenborough) (Desulfovibrio vulgaris)).